A 93-amino-acid polypeptide reads, in one-letter code: MKTLVLLSALVLLAFQVQADPIQNTDEETKTEEQPGEDDQAVSVSFGDPEGSSLQEESLRDLVCYCRKRGCKRREHINGTCRKGHLLYMLCCR.

The first 19 residues, 1–19 (MKTLVLLSALVLLAFQVQA), serve as a signal peptide directing secretion. The propeptide occupies 20-58 (DPIQNTDEETKTEEQPGEDDQAVSVSFGDPEGSSLQEES). Residues 23 to 56 (QNTDEETKTEEQPGEDDQAVSVSFGDPEGSSLQE) form a disordered region. 3 cysteine pairs are disulfide-bonded: C64–C92, C66–C81, and C71–C91.

Belongs to the alpha-defensin family. In terms of tissue distribution, paneth cells of the small bowel.

The protein localises to the secreted. Functionally, probably contributes to the antimicrobial barrier function of the small bowel mucosa. The polypeptide is Alpha-defensin 15 (Defa15) (Mus musculus (Mouse)).